Reading from the N-terminus, the 407-residue chain is Peptidase T (407 aa).

H81 contributes to the Zn(2+) binding site. The active site involves D83. A Zn(2+)-binding site is contributed by D142. E176 serves as the catalytic Proton acceptor. Zn(2+)-binding residues include E177, D199, and H381.

The protein belongs to the peptidase M20B family. Requires Zn(2+) as cofactor.

Its subcellular location is the cytoplasm. It catalyses the reaction Release of the N-terminal residue from a tripeptide.. Cleaves the N-terminal amino acid of tripeptides. This chain is Peptidase T, found in Streptococcus pneumoniae (strain Taiwan19F-14).